A 317-amino-acid chain; its full sequence is Glycine--tRNA ligase alpha subunit (317 aa).

The protein belongs to the class-II aminoacyl-tRNA synthetase family. In terms of assembly, tetramer of two alpha and two beta subunits.

The protein localises to the cytoplasm. It catalyses the reaction tRNA(Gly) + glycine + ATP = glycyl-tRNA(Gly) + AMP + diphosphate. This is Glycine--tRNA ligase alpha subunit from Pseudomonas fluorescens (strain ATCC BAA-477 / NRRL B-23932 / Pf-5).